Here is a 298-residue protein sequence, read N- to C-terminus: Ethanolamine ammonia-lyase small subunit (298 aa).

Adenosylcob(III)alamin-binding residues include valine 210, glutamate 231, and cysteine 261.

It belongs to the EutC family. In terms of assembly, the basic unit is a heterodimer which dimerizes to form tetramers. The heterotetramers trimerize; 6 large subunits form a core ring with 6 small subunits projecting outwards. The cofactor is adenosylcob(III)alamin.

The protein localises to the bacterial microcompartment. The enzyme catalyses ethanolamine = acetaldehyde + NH4(+). It functions in the pathway amine and polyamine degradation; ethanolamine degradation. Catalyzes the deamination of various vicinal amino-alcohols to oxo compounds. Allows this organism to utilize ethanolamine as the sole source of nitrogen and carbon in the presence of external vitamin B12. The sequence is that of Ethanolamine ammonia-lyase small subunit from Salmonella dublin (strain CT_02021853).